The following is a 256-amino-acid chain: Ubiquinone/menaquinone biosynthesis C-methyltransferase UbiE (256 aa).

Residues Thr-79, Asp-100, and Asp-128–Ala-129 each bind S-adenosyl-L-methionine.

This sequence belongs to the class I-like SAM-binding methyltransferase superfamily. MenG/UbiE family.

The enzyme catalyses a 2-demethylmenaquinol + S-adenosyl-L-methionine = a menaquinol + S-adenosyl-L-homocysteine + H(+). It catalyses the reaction a 2-methoxy-6-(all-trans-polyprenyl)benzene-1,4-diol + S-adenosyl-L-methionine = a 5-methoxy-2-methyl-3-(all-trans-polyprenyl)benzene-1,4-diol + S-adenosyl-L-homocysteine + H(+). It functions in the pathway quinol/quinone metabolism; menaquinone biosynthesis; menaquinol from 1,4-dihydroxy-2-naphthoate: step 2/2. Its pathway is cofactor biosynthesis; ubiquinone biosynthesis. In terms of biological role, methyltransferase required for the conversion of demethylmenaquinol (DMKH2) to menaquinol (MKH2) and the conversion of 2-polyprenyl-6-methoxy-1,4-benzoquinol (DDMQH2) to 2-polyprenyl-3-methyl-6-methoxy-1,4-benzoquinol (DMQH2). This Pseudomonas fluorescens (strain SBW25) protein is Ubiquinone/menaquinone biosynthesis C-methyltransferase UbiE.